The chain runs to 203 residues: Small ribosomal subunit protein uS4 (203 aa).

The region spanning 93–173 (RRFDNVVFRA…IPSWIQVDKA (81 aa)) is the S4 RNA-binding domain.

It belongs to the universal ribosomal protein uS4 family. Part of the 30S ribosomal subunit. Contacts protein S5. The interaction surface between S4 and S5 is involved in control of translational fidelity.

One of the primary rRNA binding proteins, it binds directly to 16S rRNA where it nucleates assembly of the body of the 30S subunit. Functionally, with S5 and S12 plays an important role in translational accuracy. In Pelodictyon phaeoclathratiforme (strain DSM 5477 / BU-1), this protein is Small ribosomal subunit protein uS4.